We begin with the raw amino-acid sequence, 90 residues long: Small ribosomal subunit protein uS19 (90 aa).

It belongs to the universal ribosomal protein uS19 family.

In terms of biological role, protein S19 forms a complex with S13 that binds strongly to the 16S ribosomal RNA. The sequence is that of Small ribosomal subunit protein uS19 from Clostridium beijerinckii (strain ATCC 51743 / NCIMB 8052) (Clostridium acetobutylicum).